A 271-amino-acid polypeptide reads, in one-letter code: Mannosyl-3-phosphoglycerate phosphatase (271 aa).

Aspartate 13 (nucleophile) is an active-site residue. The Mg(2+) site is built by aspartate 13, aspartate 15, and aspartate 214.

This sequence belongs to the HAD-like hydrolase superfamily. MPGP family. It depends on Mg(2+) as a cofactor.

Its subcellular location is the cytoplasm. It catalyses the reaction 2-O-(alpha-D-mannosyl)-3-phosphoglycerate + H2O = (2R)-2-O-(alpha-D-mannosyl)-glycerate + phosphate. In Escherichia coli (strain SE11), this protein is Mannosyl-3-phosphoglycerate phosphatase.